Reading from the N-terminus, the 464-residue chain is ATP-dependent protease ATPase subunit HslU (464 aa).

ATP contacts are provided by residues Ile19, 61 to 66, Asp277, Glu342, and Arg414; that span reads GVGKTE.

This sequence belongs to the ClpX chaperone family. HslU subfamily. As to quaternary structure, a double ring-shaped homohexamer of HslV is capped on each side by a ring-shaped HslU homohexamer. The assembly of the HslU/HslV complex is dependent on binding of ATP.

The protein localises to the cytoplasm. Its function is as follows. ATPase subunit of a proteasome-like degradation complex; this subunit has chaperone activity. The binding of ATP and its subsequent hydrolysis by HslU are essential for unfolding of protein substrates subsequently hydrolyzed by HslV. HslU recognizes the N-terminal part of its protein substrates and unfolds these before they are guided to HslV for hydrolysis. The sequence is that of ATP-dependent protease ATPase subunit HslU from Lactobacillus johnsonii (strain CNCM I-12250 / La1 / NCC 533).